The primary structure comprises 430 residues: KICSTOR complex protein kaptin (430 aa).

A disordered region spans residues Arg410–Ser430. A compositionally biased stretch (basic and acidic residues) spans Val420–Ser430.

As to quaternary structure, part of the KICSTOR complex composed of KPTN, ITFG2, KICS2 and SZT2. SZT2 probably serves as a link between the other three proteins in the KICSTOR complex and mediates the direct interaction with the GATOR1 complex. May associate with F-actin filaments.

The protein resides in the lysosome membrane. Its subcellular location is the cell projection. It localises to the lamellipodium. The protein localises to the stereocilium. As part of the KICSTOR complex functions in the amino acid-sensing branch of the TORC1 signaling pathway. Recruits, in an amino acid-independent manner, the GATOR1 complex to the lysosomal membranes and allows its interaction with GATOR2 and the RAG GTPases. Functions upstream of the RAG GTPases and is required to negatively regulate mTORC1 signaling in absence of amino acids. In absence of the KICSTOR complex mTORC1 is constitutively localized to the lysosome and activated. The KICSTOR complex is also probably involved in the regulation of mTORC1 by glucose. The polypeptide is KICSTOR complex protein kaptin (Mus musculus (Mouse)).